We begin with the raw amino-acid sequence, 451 residues long: uncharacterized protein (451 aa).

A disordered region spans residues 415 to 435 (AHGDTEWLPPPHLDHGQPRVN).

It belongs to the Rv1128c/1148c/1588c/1702c/1945/3466 family.

This is an uncharacterized protein from Mycobacterium tuberculosis (strain ATCC 25618 / H37Rv).